The chain runs to 129 residues: Transcription antitermination protein NusB (129 aa).

Belongs to the NusB family.

Its function is as follows. Involved in transcription antitermination. Required for transcription of ribosomal RNA (rRNA) genes. Binds specifically to the boxA antiterminator sequence of the ribosomal RNA (rrn) operons. The sequence is that of Transcription antitermination protein NusB from Staphylococcus aureus (strain USA300 / TCH1516).